A 280-amino-acid chain; its full sequence is L-proline cis-4-hydroxylase (280 aa).

Fe cation-binding residues include His-106, Asp-108, and His-154. 2-oxoglutarate is bound at residue Arg-164.

The protein belongs to the L-proline cis-4-/cis-3-hydroxylase family. Fe(2+) is required as a cofactor.

It catalyses the reaction L-proline + 2-oxoglutarate + O2 = cis-4-hydroxy-L-proline + succinate + CO2. Inhibited by metal ions such as Co(2+), Zn(2+), Cu(2+) or Ni(2+). Is also inhibited by EDTA or diethylpyrocarbonate (DEPC) in vitro. Unlike the procollagen-proline cis-3- and trans-4-hydroxylases from mammals, does not necessarily require L-ascorbate for activity although it does increase the activity of the enzyme. Dioxygenase that catalyzes the 2-oxoglutarate-dependent selective hydroxylation of free L-proline to cis-4-hydroxy-L-proline (cis-4-Hyp). In Mesorhizobium japonicum (strain LMG 29417 / CECT 9101 / MAFF 303099) (Mesorhizobium loti (strain MAFF 303099)), this protein is L-proline cis-4-hydroxylase.